Consider the following 372-residue polypeptide: Queuine tRNA-ribosyltransferase (372 aa).

The active-site Proton acceptor is the aspartate 93. Residues 93–97 (DSGGF), aspartate 147, glutamine 190, and glycine 217 each bind substrate. Residues 248-254 (GVGSPDC) are RNA binding. Aspartate 267 acts as the Nucleophile in catalysis. The RNA binding; important for wobble base 34 recognition stretch occupies residues 272–276 (TRMAR). The Zn(2+) site is built by cysteine 305, cysteine 307, cysteine 310, and histidine 336.

This sequence belongs to the queuine tRNA-ribosyltransferase family. As to quaternary structure, homodimer. Within each dimer, one monomer is responsible for RNA recognition and catalysis, while the other monomer binds to the replacement base PreQ1. The cofactor is Zn(2+).

It carries out the reaction 7-aminomethyl-7-carbaguanine + guanosine(34) in tRNA = 7-aminomethyl-7-carbaguanosine(34) in tRNA + guanine. It participates in tRNA modification; tRNA-queuosine biosynthesis. Functionally, catalyzes the base-exchange of a guanine (G) residue with the queuine precursor 7-aminomethyl-7-deazaguanine (PreQ1) at position 34 (anticodon wobble position) in tRNAs with GU(N) anticodons (tRNA-Asp, -Asn, -His and -Tyr). Catalysis occurs through a double-displacement mechanism. The nucleophile active site attacks the C1' of nucleotide 34 to detach the guanine base from the RNA, forming a covalent enzyme-RNA intermediate. The proton acceptor active site deprotonates the incoming PreQ1, allowing a nucleophilic attack on the C1' of the ribose to form the product. After dissociation, two additional enzymatic reactions on the tRNA convert PreQ1 to queuine (Q), resulting in the hypermodified nucleoside queuosine (7-(((4,5-cis-dihydroxy-2-cyclopenten-1-yl)amino)methyl)-7-deazaguanosine). The sequence is that of Queuine tRNA-ribosyltransferase from Desulforudis audaxviator (strain MP104C).